Consider the following 325-residue polypeptide: uncharacterized protein (325 aa).

Composition is skewed to polar residues over residues 1–21 and 29–57; these read MSYQ…SSSA and EPFS…SSRA. A disordered region spans residues 1 to 325; sequence MSYQQRANDS…LKTGHHSERY (325 aa). Over residues 86–109 the composition is skewed to basic and acidic residues; sequence ESRKKEQSDVRGGDTSYSRRHDDS. Composition is skewed to polar residues over residues 114-167 and 174-193; these read NKYS…TTQG and YSQS…TPSD. 2 stretches are compositionally biased toward low complexity: residues 200–210 and 252–278; these read YDYSSSGSHTH and ATDT…QRNA. Basic and acidic residues predominate over residues 282–325; the sequence is EDEHVSMGDKMKGNMEKMAGKLTRDPELVQKGEDLKTGHHSERY.

This is an uncharacterized protein from Schizosaccharomyces pombe (strain 972 / ATCC 24843) (Fission yeast).